The chain runs to 911 residues: DNA mismatch repair protein MutS (911 aa).

Residues 1–10 (MDNKTDHKND) are compositionally biased toward basic and acidic residues. A disordered region spans residues 1–24 (MDNKTDHKNDLNSQPVPSSAPHKE). 662 to 669 (GPNMGGKS) contributes to the ATP binding site.

Belongs to the DNA mismatch repair MutS family.

Functionally, this protein is involved in the repair of mismatches in DNA. It is possible that it carries out the mismatch recognition step. This protein has a weak ATPase activity. This Bartonella quintana (strain Toulouse) (Rochalimaea quintana) protein is DNA mismatch repair protein MutS.